We begin with the raw amino-acid sequence, 776 residues long: Ribosomal biogenesis protein LAS1L (776 aa).

Residues 185-227 (DEDQLDAEDPEEEEREIIADDVLEEIPEPQDDDKDEELAVEDD) are compositionally biased toward acidic residues. The interval 185 to 247 (DEDQLDAEDP…SHPEPSSRHK (63 aa)) is disordered. Residues 228 to 247 (ANTKGNEEVASHPEPSSRHK) are compositionally biased toward basic and acidic residues. Residues Ser-425 and Ser-509 each carry the phosphoserine modification. The tract at residues 501 to 646 (KAIEGSSSSS…DYDDDEEEDR (146 aa)) is disordered. A compositionally biased stretch (basic and acidic residues) spans 544–557 (GNLKDVKQEEKKEN). Composition is skewed to acidic residues over residues 558–602 (EEEE…EEEE) and 611–646 (MEAD…EEDR). At Ser-658 the chain carries Phosphoserine. Residues 677-696 (SAWQVSSEDVRWGTFPLGRL) are interaction with NOL9. The disordered stretch occupies residues 733–759 (SSTLSLCCGGSNTNSSSSSSSGNMEGL). The span at 741 to 755 (GGSNTNSSSSSSSGN) shows a compositional bias: low complexity.

Belongs to the LAS1 family. In terms of assembly, component of some MLL1/MLL complex, at least composed of the core components KMT2A/MLL1, ASH2L, HCFC1/HCF1, WDR5 and RBBP5, as well as the facultative components BACC1, CHD8, E2F6, HSP70, INO80C, KANSL1, LAS1L, MAX, MCRS1, MGA, MYST1/MOF, PELP1, PHF20, PRP31, RING2, RUVB1/TIP49A, RUVB2/TIP49B, SENP3, TAF1, TAF4, TAF6, TAF7, TAF9 and TEX10. Component of the 5FMC complex, at least composed of PELP1, LAS1L, TEX10, WDR18 and SENP3; the complex interacts with methylated CHTOP and ZNF148. Interacts with NOL9 to form an ITS2 pre-rRNA endonuclease-kinase complex.

Its subcellular location is the nucleus. The protein localises to the nucleolus. The protein resides in the nucleoplasm. It localises to the cytoplasm. Required for the synthesis of the 60S ribosomal subunit and maturation of the 28S rRNA. Functions as a component of the Five Friends of Methylated CHTOP (5FMC) complex; the 5FMC complex is recruited to ZNF148 by methylated CHTOP, leading to desumoylation of ZNF148 and subsequent transactivation of ZNF148 target genes. Required for the efficient pre-rRNA processing at both ends of internal transcribed spacer 2 (ITS2). This is Ribosomal biogenesis protein LAS1L (Las1l) from Mus musculus (Mouse).